Consider the following 234-residue polypeptide: NAD-reducing hydrogenase HoxS subunit gamma (234 aa).

A 2Fe-2S ferredoxin-type domain is found at 2-77 (SIQITIDGKT…GLNVEVNDPE (76 aa)). [2Fe-2S] cluster contacts are provided by cysteine 35, cysteine 46, cysteine 49, and cysteine 61. One can recognise a 4Fe-4S His(Cys)3-ligated-type domain in the interval 77–116 (ELVDMRKALVEFLFAEGNHNCPSCEKSGRCQLQAVGYEVD). Residues histidine 95, cysteine 97, cysteine 100, cysteine 106, cysteine 145, cysteine 148, cysteine 151, and cysteine 198 each coordinate [4Fe-4S] cluster.

Belongs to the complex I 75 kDa subunit family. In terms of assembly, tetramer of an alpha and a gamma subunits (flavin-containing dimer), and a delta and a nickel-containing beta subunits (hydrogenase dimer). [2Fe-2S] cluster is required as a cofactor. It depends on [4Fe-4S] cluster as a cofactor.

It is found in the cytoplasm. The catalysed reaction is H2 + NAD(+) = NADH + H(+). Its function is as follows. Subunits alpha and gamma of HoxS constitute an NADH--oxidoreductase. The polypeptide is NAD-reducing hydrogenase HoxS subunit gamma (hoxU) (Cupriavidus necator (strain ATCC 17699 / DSM 428 / KCTC 22496 / NCIMB 10442 / H16 / Stanier 337) (Ralstonia eutropha)).